We begin with the raw amino-acid sequence, 321 residues long: Lipoyl synthase (321 aa).

Cys-68, Cys-73, Cys-79, Cys-94, Cys-98, Cys-101, and Ser-308 together coordinate [4Fe-4S] cluster. One can recognise a Radical SAM core domain in the interval 80–297 (FNHGTATFMI…KEEAMAMGFT (218 aa)).

It belongs to the radical SAM superfamily. Lipoyl synthase family. [4Fe-4S] cluster serves as cofactor.

Its subcellular location is the cytoplasm. It carries out the reaction [[Fe-S] cluster scaffold protein carrying a second [4Fe-4S](2+) cluster] + N(6)-octanoyl-L-lysyl-[protein] + 2 oxidized [2Fe-2S]-[ferredoxin] + 2 S-adenosyl-L-methionine + 4 H(+) = [[Fe-S] cluster scaffold protein] + N(6)-[(R)-dihydrolipoyl]-L-lysyl-[protein] + 4 Fe(3+) + 2 hydrogen sulfide + 2 5'-deoxyadenosine + 2 L-methionine + 2 reduced [2Fe-2S]-[ferredoxin]. Its pathway is protein modification; protein lipoylation via endogenous pathway; protein N(6)-(lipoyl)lysine from octanoyl-[acyl-carrier-protein]: step 2/2. Its function is as follows. Catalyzes the radical-mediated insertion of two sulfur atoms into the C-6 and C-8 positions of the octanoyl moiety bound to the lipoyl domains of lipoate-dependent enzymes, thereby converting the octanoylated domains into lipoylated derivatives. The polypeptide is Lipoyl synthase (Serratia proteamaculans (strain 568)).